The chain runs to 179 residues: uncharacterized protein (179 aa).

Residues 1-14 show a composition bias toward basic and acidic residues; it reads MTKKVKLDQDEINN. Disordered stretches follow at residues 1–90 and 121–147; these read MTKK…NNFC and HKKS…DKKV. Low complexity-rich tracts occupy residues 15 to 90 and 126 to 137; these read KNKN…NNFC and RSQSQSSLNSFD. Basic and acidic residues predominate over residues 138–147; the sequence is QDNKSKDKKV.

This is an uncharacterized protein from Dictyostelium discoideum (Social amoeba).